Here is a 184-residue protein sequence, read N- to C-terminus: Probable S-adenosyl-L-methionine-binding protein PYRAB06630 (184 aa).

The TsaA-like domain maps to Y9–N140. S-adenosyl-L-methionine contacts are provided by residues P26–Q28, H65–R66, R89, and L120–T123.

It belongs to the tRNA methyltransferase O family.

In Pyrococcus abyssi (strain GE5 / Orsay), this protein is Probable S-adenosyl-L-methionine-binding protein PYRAB06630.